Consider the following 66-residue polypeptide: UPF0370 protein YpfN (66 aa).

Residues L4–I24 traverse the membrane as a helical segment. The disordered stretch occupies residues K39 to K66. The segment covering L42–K66 has biased composition (basic and acidic residues).

Belongs to the UPF0370 family.

It localises to the cell membrane. This chain is UPF0370 protein YpfN, found in Salmonella paratyphi B (strain ATCC BAA-1250 / SPB7).